Here is a 29-residue protein sequence, read N- to C-terminus: Cytolysin Uc-1 (29 aa).

Over residues 1 to 15 (DEQTGSKGPNENLPS) the composition is skewed to polar residues. The interval 1-29 (DEQTGSKGPNENLPSQKDLXAKASXLTEV) is disordered.

It localises to the secreted. Its subcellular location is the nematocyst. It is found in the target cell membrane. Pore-forming toxin that lyses bovine erythrocytes at nanomolar concentrations. Is devoid of enzymatic activity. Binds to monolayers and efficiently permeabilizes small lipid vesicles composed of sphingomyelin and cholesterol. The cytolytic activity is not prevented by cholesterol or sphingomyelin. This Urticina crassicornis (Mottled anemone) protein is Cytolysin Uc-1.